The chain runs to 445 residues: ATP-dependent protease ATPase subunit HslU (445 aa).

ATP contacts are provided by residues Ile17, 59–64 (GVGKTE), Asp254, Glu319, and Arg391.

This sequence belongs to the ClpX chaperone family. HslU subfamily. In terms of assembly, a double ring-shaped homohexamer of HslV is capped on each side by a ring-shaped HslU homohexamer. The assembly of the HslU/HslV complex is dependent on binding of ATP.

It is found in the cytoplasm. ATPase subunit of a proteasome-like degradation complex; this subunit has chaperone activity. The binding of ATP and its subsequent hydrolysis by HslU are essential for unfolding of protein substrates subsequently hydrolyzed by HslV. HslU recognizes the N-terminal part of its protein substrates and unfolds these before they are guided to HslV for hydrolysis. This chain is ATP-dependent protease ATPase subunit HslU, found in Pseudomonas syringae pv. tomato (strain ATCC BAA-871 / DC3000).